The sequence spans 295 residues: MENKPDWLRVRMPGGAVFDEVTELVRRYELNTVCEEAACPNIGECWNKRHATIMIMGSVCTRACAFCNVKVGVPNALDPDEPERVGAAISKLGLKHVVITSVDRDDLPDGGASHFAKCVREIRKRDSSVTVEILTPDFLGKPCAIDIIASARPDVYNHNLETVPRLYSRVRPRAKYFNSLNLLKEVKDKSPGVFTKSGFMLGLGESKEEVYQVMDDLRCAGVDFIVMGQYLQPTKNNIEVHRYVPPSEFEQYKLMAYAKGFSMVAASPLARSSYHAEDDFRKLKELRFARAKVNE.

Positions 34, 39, 45, 60, 64, 67, and 273 each coordinate [4Fe-4S] cluster. Residues 46–262 (WNKRHATIMI…KLMAYAKGFS (217 aa)) form the Radical SAM core domain.

The protein belongs to the radical SAM superfamily. Lipoyl synthase family. The cofactor is [4Fe-4S] cluster.

Its subcellular location is the cytoplasm. The enzyme catalyses [[Fe-S] cluster scaffold protein carrying a second [4Fe-4S](2+) cluster] + N(6)-octanoyl-L-lysyl-[protein] + 2 oxidized [2Fe-2S]-[ferredoxin] + 2 S-adenosyl-L-methionine + 4 H(+) = [[Fe-S] cluster scaffold protein] + N(6)-[(R)-dihydrolipoyl]-L-lysyl-[protein] + 4 Fe(3+) + 2 hydrogen sulfide + 2 5'-deoxyadenosine + 2 L-methionine + 2 reduced [2Fe-2S]-[ferredoxin]. Its pathway is protein modification; protein lipoylation via endogenous pathway; protein N(6)-(lipoyl)lysine from octanoyl-[acyl-carrier-protein]: step 2/2. Its function is as follows. Catalyzes the radical-mediated insertion of two sulfur atoms into the C-6 and C-8 positions of the octanoyl moiety bound to the lipoyl domains of lipoate-dependent enzymes, thereby converting the octanoylated domains into lipoylated derivatives. This is Lipoyl synthase from Anaplasma marginale (strain St. Maries).